The sequence spans 331 residues: Type 2 lactosamine alpha-2,3-sialyltransferase (331 aa).

Over 1 to 4 (MRGY) the chain is Cytoplasmic. The helical; Signal-anchor for type II membrane protein transmembrane segment at 5–25 (LVAIFLSAVFLYYVLHCILWG) threads the bilayer. The Lumenal portion of the chain corresponds to 26–331 (TNVYWVAPVE…KNLVINLTQD (306 aa)). Residues Asn129, Asn181, Asn282, Asn295, Asn308, and Asn327 are each glycosylated (N-linked (GlcNAc...) asparagine).

It belongs to the glycosyltransferase 29 family.

It localises to the golgi apparatus membrane. The enzyme catalyses a neolactoside nLc4Cer(d18:1(4E)) + CMP-N-acetyl-beta-neuraminate = a neolactoside IV(3)-alpha-NeuAc-nLc4Cer(d18:1(4E)) + CMP + H(+). The catalysed reaction is a beta-D-galactosyl-(1-&gt;4)-N-acetyl-beta-D-glucosaminyl derivative + CMP-N-acetyl-beta-neuraminate = an N-acetyl-alpha-neuraminyl-(2-&gt;3)-beta-D-galactosyl-(1-&gt;4)-N-acetyl-beta-D-glucosaminyl derivative + CMP + H(+). It carries out the reaction a neolactoside nLc6Cer(d18:1(4E)) + CMP-N-acetyl-beta-neuraminate = a neolactoside VI(3)-alpha-NeuNAc-nLc6Cer(d18:1(4E)) + CMP + H(+). Its function is as follows. Transfers the sialyl residue from CMP-N-acetyl-beta-neuraminate to the terminal galactose residue on sugar chains of glycoproteins and glycolipids. It's alpha-2,3-sialyltransferase activity is specific toward type II glycan chains (Galbeta1-4GlcNAc) on glycoproteins and glycolipids such as neolactosides nLc4Cer and nLc6Cer, whose sialyl-products serve as precursors for the Lewis X antigen. Critically involved in the synthesis of functional selectin ligands needed for neutrophil recruitment during inflammation and lymphocyte homing to the lymph nodes. The chain is Type 2 lactosamine alpha-2,3-sialyltransferase (ST3GAL6) from Pan troglodytes (Chimpanzee).